A 334-amino-acid polypeptide reads, in one-letter code: Trans-1,2-dihydrobenzene-1,2-diol dehydrogenase (334 aa).

The protein belongs to the Gfo/Idh/MocA family. As to quaternary structure, homodimer.

The catalysed reaction is (1R,2R)-1,2-dihydrobenzene-1,2-diol + NADP(+) = catechol + NADPH + H(+). It catalyses the reaction D-xylose + NADP(+) = D-xylono-1,5-lactone + NADPH + H(+). In Danio rerio (Zebrafish), this protein is Trans-1,2-dihydrobenzene-1,2-diol dehydrogenase (dhdh).